Here is a 424-residue protein sequence, read N- to C-terminus: Adenylosuccinate synthetase 2 (424 aa).

GTP-binding positions include 11–17 (GDEGKGK) and 39–41 (GHT). Asp-12 (proton acceptor) is an active-site residue. Mg(2+) contacts are provided by Asp-12 and Gly-39. Residues 12 to 15 (DEGK), 37 to 40 (NAGH), Thr-127, Arg-141, Gln-223, Thr-238, and Arg-302 each bind IMP. The Proton donor role is filled by His-40. Residue 298–304 (TTTGRGR) participates in substrate binding. Residues Arg-304, 330 to 332 (KLD), and 412 to 414 (SVG) contribute to the GTP site.

This sequence belongs to the adenylosuccinate synthetase family. In terms of assembly, homodimer. It depends on Mg(2+) as a cofactor.

It localises to the cytoplasm. The enzyme catalyses IMP + L-aspartate + GTP = N(6)-(1,2-dicarboxyethyl)-AMP + GDP + phosphate + 2 H(+). Its pathway is purine metabolism; AMP biosynthesis via de novo pathway; AMP from IMP: step 1/2. Functionally, plays an important role in the de novo pathway of purine nucleotide biosynthesis. Catalyzes the first committed step in the biosynthesis of AMP from IMP. In Methanosarcina acetivorans (strain ATCC 35395 / DSM 2834 / JCM 12185 / C2A), this protein is Adenylosuccinate synthetase 2.